Consider the following 160-residue polypeptide: Large ribosomal subunit protein uL15 (160 aa).

Basic and acidic residues predominate over residues 1–13 (MKLNEIRDNEGAR). The tract at residues 1–41 (MKLNEIRDNEGARKSRIRVGRGIGSGKGKTGGRGVKGQKSR) is disordered. The span at 21 to 35 (RGIGSGKGKTGGRGV) shows a compositional bias: gly residues.

It belongs to the universal ribosomal protein uL15 family. Part of the 50S ribosomal subunit.

In terms of biological role, binds to the 23S rRNA. The chain is Large ribosomal subunit protein uL15 from Parvibaculum lavamentivorans (strain DS-1 / DSM 13023 / NCIMB 13966).